The chain runs to 152 residues: MAKRVQVVLNEDIKSLGNDGDLVEVAPGFARNFLLPNKKALPVTPTVLKQVEHRRAKQAEKEAAKKQEAIDFQTALTTIGRFTVKKQVGEDGVLFGTVTNGDVAEVVKEATKKDIDRRDISVPEIHGVGKYKVQIKLHNEVNAEINLEVTSY.

It belongs to the bacterial ribosomal protein bL9 family.

In terms of biological role, binds to the 23S rRNA. The sequence is that of Large ribosomal subunit protein bL9 from Prochlorococcus marinus (strain NATL1A).